Consider the following 658-residue polypeptide: Glycogen debranching enzyme (658 aa).

Asp-336 serves as the catalytic Nucleophile. Glu-371 serves as the catalytic Proton donor. Residues Glu-459–Gly-484 form a disordered region.

Belongs to the glycosyl hydrolase 13 family.

It catalyses the reaction Hydrolysis of (1-&gt;6)-alpha-D-glucosidic linkages to branches with degrees of polymerization of three or four glucose residues in limit dextrin.. It participates in glycan degradation; glycogen degradation. Its function is as follows. Removes maltotriose and maltotetraose chains that are attached by 1,6-alpha-linkage to the limit dextrin main chain, generating a debranched limit dextrin. This Salmonella dublin (strain CT_02021853) protein is Glycogen debranching enzyme.